The sequence spans 343 residues: Heat-inducible transcription repressor HrcA (343 aa).

The protein belongs to the HrcA family.

Functionally, negative regulator of class I heat shock genes (grpE-dnaK-dnaJ and groELS operons). Prevents heat-shock induction of these operons. This is Heat-inducible transcription repressor HrcA from Bacillus subtilis (strain 168).